We begin with the raw amino-acid sequence, 166 residues long: Lipoprotein signal peptidase (166 aa).

The next 4 membrane-spanning stretches (helical) occupy residues 9 to 29 (ASGA…FDQL), 45 to 65 (ALTS…FGFL), 71 to 91 (WQRW…CYLL), and 99 to 119 (LFSL…IDRL). Active-site residues include aspartate 126 and aspartate 144. The helical transmembrane segment at 135–155 (WHFPAFNLADSAITVGAVLLI) threads the bilayer.

The protein belongs to the peptidase A8 family.

The protein localises to the cell inner membrane. It carries out the reaction Release of signal peptides from bacterial membrane prolipoproteins. Hydrolyzes -Xaa-Yaa-Zaa-|-(S,diacylglyceryl)Cys-, in which Xaa is hydrophobic (preferably Leu), and Yaa (Ala or Ser) and Zaa (Gly or Ala) have small, neutral side chains.. Its pathway is protein modification; lipoprotein biosynthesis (signal peptide cleavage). Its function is as follows. This protein specifically catalyzes the removal of signal peptides from prolipoproteins. The chain is Lipoprotein signal peptidase from Burkholderia vietnamiensis (strain G4 / LMG 22486) (Burkholderia cepacia (strain R1808)).